Reading from the N-terminus, the 216-residue chain is Uracil phosphoribosyltransferase (216 aa).

A GTP-binding site is contributed by 30-34 (KTLVR). 5-phospho-alpha-D-ribose 1-diphosphate is bound by residues arginine 80, arginine 105, and 140 to 148 (DPMIATAST). Uracil contacts are provided by residues isoleucine 203 and 208-210 (GDA). Residue aspartate 209 coordinates 5-phospho-alpha-D-ribose 1-diphosphate.

The protein belongs to the UPRTase family. It depends on Mg(2+) as a cofactor.

It catalyses the reaction UMP + diphosphate = 5-phospho-alpha-D-ribose 1-diphosphate + uracil. It functions in the pathway pyrimidine metabolism; UMP biosynthesis via salvage pathway; UMP from uracil: step 1/1. Allosterically activated by GTP. Functionally, catalyzes the conversion of uracil and 5-phospho-alpha-D-ribose 1-diphosphate (PRPP) to UMP and diphosphate. This chain is Uracil phosphoribosyltransferase, found in Sulfurisphaera tokodaii (strain DSM 16993 / JCM 10545 / NBRC 100140 / 7) (Sulfolobus tokodaii).